A 289-amino-acid polypeptide reads, in one-letter code: BTB/POZ domain-containing protein KCTD7 (289 aa).

The tract at residues 1–42 (MVVVTGREPDSRHSDGAMSSSEAEDDFLEPATPTATQAGHGL) is disordered. In terms of domain architecture, BTB spans 53 to 141 (VPLNIGGAHF…YAIGPLLEQL (89 aa)).

Interacts with CUL3. High expression in brain, particularly in post-mitotic neurons. Expressed in the mitral cells of the olfactory bulbs, the hippocampus, the deep layers of the cerebral cortex and Purkinje cells of the cerebellum. Not detected in astrocytes or microglial cells. Also expressed in heart, liver, spleen and kidney.

It is found in the cell membrane. The protein resides in the cytoplasm. Its subcellular location is the cytosol. Its function is as follows. May be involved in the control of excitability of cortical neurons. This is BTB/POZ domain-containing protein KCTD7 (Kctd7) from Mus musculus (Mouse).